A 223-amino-acid chain; its full sequence is Large ribosomal subunit protein uL4c (223 aa).

The interval 61 to 96 is disordered; sequence TKTRSEVEGGGKKPWKQKGTGNARAGSSNSPLWKGG.

It belongs to the universal ribosomal protein uL4 family. In terms of assembly, part of the 50S ribosomal subunit.

It is found in the plastid. It localises to the chloroplast. Functionally, probably binds the 23S rRNA. The sequence is that of Large ribosomal subunit protein uL4c (rpl4) from Guillardia theta (Cryptophyte).